A 72-amino-acid chain; its full sequence is Translation initiation factor IF-1 (72 aa).

An S1-like domain is found at 1 to 72 (MAKEDTLEFP…SKGRINYRFK (72 aa)).

This sequence belongs to the IF-1 family. In terms of assembly, component of the 30S ribosomal translation pre-initiation complex which assembles on the 30S ribosome in the order IF-2 and IF-3, IF-1 and N-formylmethionyl-tRNA(fMet); mRNA recruitment can occur at any time during PIC assembly.

It localises to the cytoplasm. Functionally, one of the essential components for the initiation of protein synthesis. Stabilizes the binding of IF-2 and IF-3 on the 30S subunit to which N-formylmethionyl-tRNA(fMet) subsequently binds. Helps modulate mRNA selection, yielding the 30S pre-initiation complex (PIC). Upon addition of the 50S ribosomal subunit IF-1, IF-2 and IF-3 are released leaving the mature 70S translation initiation complex. This chain is Translation initiation factor IF-1, found in Cereibacter sphaeroides (strain ATCC 17029 / ATH 2.4.9) (Rhodobacter sphaeroides).